The primary structure comprises 220 residues: StAR-related lipid transfer protein 6 (220 aa).

In terms of domain architecture, START spans 1–208 (MDFKAIAQQT…AKDGIKAHRT (208 aa)).

May be involved in the intracellular transport of sterols or other lipids. May bind cholesterol or other sterols. The chain is StAR-related lipid transfer protein 6 (STARD6) from Homo sapiens (Human).